The following is a 391-amino-acid chain: Tryptophan synthase beta chain (391 aa).

Lys-84 is subject to N6-(pyridoxal phosphate)lysine.

This sequence belongs to the TrpB family. As to quaternary structure, tetramer of two alpha and two beta chains. It depends on pyridoxal 5'-phosphate as a cofactor.

The catalysed reaction is (1S,2R)-1-C-(indol-3-yl)glycerol 3-phosphate + L-serine = D-glyceraldehyde 3-phosphate + L-tryptophan + H2O. The protein operates within amino-acid biosynthesis; L-tryptophan biosynthesis; L-tryptophan from chorismate: step 5/5. Functionally, the beta subunit is responsible for the synthesis of L-tryptophan from indole and L-serine. This is Tryptophan synthase beta chain from Thermoanaerobacter sp. (strain X514).